The chain runs to 432 residues: Adenylosuccinate synthetase (432 aa).

GTP-binding positions include 12–18 (GDEGKGK) and 40–42 (GHT). Asp-13 acts as the Proton acceptor in catalysis. 2 residues coordinate Mg(2+): Asp-13 and Gly-40. IMP contacts are provided by residues 13 to 16 (DEGK), 38 to 41 (NAGH), Thr-129, Arg-143, Gln-224, Thr-239, and Arg-303. Residue His-41 is the Proton donor of the active site. Residue 299 to 305 (VTTGRRR) coordinates substrate. Residues Arg-305, 331–333 (KLD), and 413–415 (GVG) contribute to the GTP site.

This sequence belongs to the adenylosuccinate synthetase family. In terms of assembly, homodimer. The cofactor is Mg(2+).

The protein resides in the cytoplasm. It catalyses the reaction IMP + L-aspartate + GTP = N(6)-(1,2-dicarboxyethyl)-AMP + GDP + phosphate + 2 H(+). Its pathway is purine metabolism; AMP biosynthesis via de novo pathway; AMP from IMP: step 1/2. Plays an important role in the de novo pathway of purine nucleotide biosynthesis. Catalyzes the first committed step in the biosynthesis of AMP from IMP. The protein is Adenylosuccinate synthetase of Mycobacterium leprae (strain TN).